Here is a 343-residue protein sequence, read N- to C-terminus: MIEFKDVTKTFDAKQGAVHAVQDVNLKIEDGHIYGIVGYSGAGKSTLVRMLNGLETPTSGSVVIDDVNITTLSGAKLRAQRQKIGMIFQHFNLLWSRTVLENIMFPLEIAGLSKVDARKKAEHLADLVGLAGRETAYPSELSGGQKQRVGIARALANDPQILLSDEATSALDPQTTDEVLDLLLSINQKLHLTIVLITHEMHVIRKIADHVAVMEAGKIVEQGPVLEVFKRPQQAVTKRFVNEEVTPSLNDTTVVVDQLLAKYPKGTIVQLTFHGDQAQLPIVSEMLKKYPLDLNIIEGGIHQTQEGAIGSLYLQLTGDQEQIKGALAYLQTMRVETEVLNRE.

The region spanning 2–241 (IEFKDVTKTF…PQQAVTKRFV (240 aa)) is the ABC transporter domain. 38-45 (GYSGAGKS) lines the ATP pocket.

It belongs to the ABC transporter superfamily. Methionine importer (TC 3.A.1.24) family. As to quaternary structure, the complex is composed of two ATP-binding proteins (MetN), two transmembrane proteins (MetI) and a solute-binding protein (MetQ).

The protein resides in the cell membrane. The catalysed reaction is L-methionine(out) + ATP + H2O = L-methionine(in) + ADP + phosphate + H(+). It carries out the reaction D-methionine(out) + ATP + H2O = D-methionine(in) + ADP + phosphate + H(+). In terms of biological role, part of the ABC transporter complex MetNIQ involved in methionine import. Responsible for energy coupling to the transport system. The chain is Methionine import ATP-binding protein MetN 2 from Lactiplantibacillus plantarum (strain ATCC BAA-793 / NCIMB 8826 / WCFS1) (Lactobacillus plantarum).